A 149-amino-acid polypeptide reads, in one-letter code: 3-hydroxyacyl-[acyl-carrier-protein] dehydratase FabZ (149 aa).

Residue histidine 52 is part of the active site.

This sequence belongs to the thioester dehydratase family. FabZ subfamily.

The protein resides in the cytoplasm. The catalysed reaction is a (3R)-hydroxyacyl-[ACP] = a (2E)-enoyl-[ACP] + H2O. Functionally, involved in unsaturated fatty acids biosynthesis. Catalyzes the dehydration of short chain beta-hydroxyacyl-ACPs and long chain saturated and unsaturated beta-hydroxyacyl-ACPs. The sequence is that of 3-hydroxyacyl-[acyl-carrier-protein] dehydratase FabZ from Cupriavidus necator (strain ATCC 17699 / DSM 428 / KCTC 22496 / NCIMB 10442 / H16 / Stanier 337) (Ralstonia eutropha).